We begin with the raw amino-acid sequence, 518 residues long: Cytochrome P450 monooxygenase COX1 (518 aa).

Residues 7–25 (VLIALSSIVVAYFVKTALA) form a helical membrane-spanning segment. 5 N-linked (GlcNAc...) asparagine glycosylation sites follow: Asn-48, Asn-100, Asn-292, Asn-302, and Asn-351. Cys-450 contributes to the heme binding site. N-linked (GlcNAc...) asparagine glycosylation occurs at Asn-457.

This sequence belongs to the cytochrome P450 family. Requires heme as cofactor.

The protein resides in the membrane. The protein operates within secondary metabolite biosynthesis. In terms of biological role, cytochrome P450 monooxygenase; part of the gene cluster that mediates the biosynthesis of alpha-cuprenene and oxidized derivatives. The alpha-cuprenene synthase COP6 is the only sesquiterpene synthase identified in C.cinereus that appears to be part of a biosynthetic gene cluster and is highly specific since it catalyzes the cyclization of (2E,6E)-farnesyl diphosphate into only one product, alpha-cuprenene. The cytochrome P450 monooxygenase COX2 then oxidizes the cyclohexadiene ring of alpha-cuprenene at positions 1 and 4, yielding first alpha-cuparene, followed by alpha-cuparophenol and a further yet unidentified compound resulting from one additional oxidation step. The cytochrome P450 monooxygenase COX1 then likely catalyzes the oxidation at position 9 of the pentane ring of alpha-cuprenene to give the corresponding hydroxy or ketone derivatives. The protein is Cytochrome P450 monooxygenase COX1 of Coprinopsis cinerea (strain Okayama-7 / 130 / ATCC MYA-4618 / FGSC 9003) (Inky cap fungus).